A 154-amino-acid polypeptide reads, in one-letter code: Proline dehydrogenase transcriptional activator (154 aa).

Residues 5 to 66 (IDATDRRILH…MLSPIRLGLI (62 aa)) enclose the HTH asnC-type domain. Residues 24 to 43 (VTELARKVGLSKTPVAARIR) constitute a DNA-binding region (H-T-H motif).

Functionally, transcriptional activator of the putA gene in response to proline. This chain is Proline dehydrogenase transcriptional activator (putR), found in Rhodobacter capsulatus (Rhodopseudomonas capsulata).